Reading from the N-terminus, the 392-residue chain is Bifunctional enzyme Fae/Hps (392 aa).

The formaldehyde-activating enzyme stretch occupies residues 1 to 161 (MFLVGEALIG…YEKERSVHPV (161 aa)). H17 functions as the Proton donor in the catalytic mechanism. 5 residues coordinate substrate: D19, L48, K66, T68, and Q83. Residues 162–392 (MGYRVMRLWD…IDQYRIMTDF (231 aa)) form a 3-hexulose-6-phosphate synthase region.

The protein in the N-terminal section; belongs to the formaldehyde-activating enzyme family. In the C-terminal section; belongs to the HPS/KGPDC family. HPS subfamily.

It catalyses the reaction 5,6,7,8-tetrahydromethanopterin + formaldehyde = 5,10-methylenetetrahydromethanopterin + H2O. The catalysed reaction is D-ribulose 5-phosphate + formaldehyde = D-arabino-hex-3-ulose 6-phosphate. It participates in carbohydrate biosynthesis; D-ribose 5-phosphate biosynthesis. In terms of biological role, catalyzes the condensation of formaldehyde with tetrahydromethanopterin (H(4)MPT) to 5,10-methylenetetrahydromethanopterin. Catalyzes the reversible formation of ribulose-5-phosphate and formaldehyde from 3-hexulose-6-phosphate. The protein is Bifunctional enzyme Fae/Hps of Methanothrix thermoacetophila (strain DSM 6194 / JCM 14653 / NBRC 101360 / PT) (Methanosaeta thermophila).